A 104-amino-acid polypeptide reads, in one-letter code: L-rhamnose mutarotase (104 aa).

Residue Y18 participates in substrate binding. The active-site Proton donor is the H22. Substrate is bound by residues Y41 and 76 to 77; that span reads WW.

Belongs to the rhamnose mutarotase family. As to quaternary structure, homodimer.

It localises to the cytoplasm. The catalysed reaction is alpha-L-rhamnose = beta-L-rhamnose. It functions in the pathway carbohydrate metabolism; L-rhamnose metabolism. Functionally, involved in the anomeric conversion of L-rhamnose. The chain is L-rhamnose mutarotase from Bacillus subtilis (strain 168).